A 217-amino-acid chain; its full sequence is tRNA (guanine-N(7)-)-methyltransferase (217 aa).

Glu-44, Glu-69, Asn-96, and Asp-118 together coordinate S-adenosyl-L-methionine. Asp-118 is an active-site residue. Lys-122 contributes to the substrate binding site. Residues 124–129 are interaction with RNA; sequence RHEKRR. Residues Asp-154 and 191–194 each bind substrate; that span reads TEYE.

Belongs to the class I-like SAM-binding methyltransferase superfamily. TrmB family.

The enzyme catalyses guanosine(46) in tRNA + S-adenosyl-L-methionine = N(7)-methylguanosine(46) in tRNA + S-adenosyl-L-homocysteine. The protein operates within tRNA modification; N(7)-methylguanine-tRNA biosynthesis. Its function is as follows. Catalyzes the formation of N(7)-methylguanine at position 46 (m7G46) in tRNA. This Geobacillus kaustophilus (strain HTA426) protein is tRNA (guanine-N(7)-)-methyltransferase.